The primary structure comprises 155 residues: Cytochrome c-550 (155 aa).

The signal sequence occupies residues Met-1 to Ala-20. At Gln-21 the chain carries Pyrrolidone carboxylic acid. Heme c contacts are provided by Cys-35, Cys-38, His-39, and Met-120. The propeptide occupies Ala-150–Asn-155.

Post-translationally, binds 1 heme c group covalently per subunit.

The chain is Cytochrome c-550 (cycA) from Paracoccus denitrificans.